The primary structure comprises 144 residues: Small ribosomal subunit protein bS6 (144 aa).

A disordered region spans residues 97 to 144 (EEGPSAMMRKADRDRERDERGGPREGGFRSERGPRRPREEETTASVEE). A compositionally biased stretch (basic and acidic residues) spans 105–137 (RKADRDRERDERGGPREGGFRSERGPRRPREEE).

It belongs to the bacterial ribosomal protein bS6 family.

In terms of biological role, binds together with bS18 to 16S ribosomal RNA. This Afipia carboxidovorans (strain ATCC 49405 / DSM 1227 / KCTC 32145 / OM5) (Oligotropha carboxidovorans) protein is Small ribosomal subunit protein bS6.